The following is a 204-amino-acid chain: UPF0637 protein lin1053 (204 aa).

The protein belongs to the UPF0637 family.

This Listeria innocua serovar 6a (strain ATCC BAA-680 / CLIP 11262) protein is UPF0637 protein lin1053.